Reading from the N-terminus, the 528-residue chain is uncharacterized protein (528 aa).

The tract at residues 1–51 (MEHPKRPTPKNEALHIDASGRGESSFSVHRSHSGGHEPFAPSPGSSIGASV) is disordered. 2 consecutive repeat copies span residues 185–213 (EQEE…VKKY) and 285–313 (EQEQ…QQAL). The tract at residues 185–313 (EQEEEYISNS…EEKRKLQQAL (129 aa)) is 2 X 29 AA repeats. Disordered stretches follow at residues 467-497 (RAHG…NNDT) and 509-528 (TVHP…DSHY). Positions 472–496 (SPPTVVVQPSTSRAGSNSTANINND) are enriched in polar residues.

This is an uncharacterized protein from Caenorhabditis elegans.